A 284-amino-acid polypeptide reads, in one-letter code: Elongation factor Ts (284 aa).

The tract at residues 80 to 83 (TDFV) is involved in Mg(2+) ion dislocation from EF-Tu.

It belongs to the EF-Ts family.

Its subcellular location is the cytoplasm. Functionally, associates with the EF-Tu.GDP complex and induces the exchange of GDP to GTP. It remains bound to the aminoacyl-tRNA.EF-Tu.GTP complex up to the GTP hydrolysis stage on the ribosome. In Photobacterium profundum (strain SS9), this protein is Elongation factor Ts.